Here is a 332-residue protein sequence, read N- to C-terminus: Glycerol-3-phosphate dehydrogenase [NAD(P)+] (332 aa).

Ser11, Trp12, Arg32, Arg33, and Lys106 together coordinate NADPH. Residues Lys106 and Gly136 each contribute to the sn-glycerol 3-phosphate site. Ala140 contributes to the NADPH binding site. Lys191, Asp244, Ser254, Arg255, and Asn256 together coordinate sn-glycerol 3-phosphate. The Proton acceptor role is filled by Lys191. Arg255 lines the NADPH pocket. Residues Val280 and Glu282 each coordinate NADPH.

It belongs to the NAD-dependent glycerol-3-phosphate dehydrogenase family.

The protein resides in the cytoplasm. The enzyme catalyses sn-glycerol 3-phosphate + NAD(+) = dihydroxyacetone phosphate + NADH + H(+). It catalyses the reaction sn-glycerol 3-phosphate + NADP(+) = dihydroxyacetone phosphate + NADPH + H(+). It functions in the pathway membrane lipid metabolism; glycerophospholipid metabolism. Catalyzes the reduction of the glycolytic intermediate dihydroxyacetone phosphate (DHAP) to sn-glycerol 3-phosphate (G3P), the key precursor for phospholipid synthesis. The sequence is that of Glycerol-3-phosphate dehydrogenase [NAD(P)+] from Corynebacterium kroppenstedtii (strain DSM 44385 / JCM 11950 / CIP 105744 / CCUG 35717).